The primary structure comprises 395 residues: Acetylornithine aminotransferase (395 aa).

Pyridoxal 5'-phosphate contacts are provided by residues 117–118 (GA) and F144. R147 is a binding site for N(2)-acetyl-L-ornithine. 230 to 233 (DEVQ) contributes to the pyridoxal 5'-phosphate binding site. At K259 the chain carries N6-(pyridoxal phosphate)lysine. S285 contacts N(2)-acetyl-L-ornithine. T286 serves as a coordination point for pyridoxal 5'-phosphate.

This sequence belongs to the class-III pyridoxal-phosphate-dependent aminotransferase family. ArgD subfamily. In terms of assembly, homodimer. The cofactor is pyridoxal 5'-phosphate.

The protein resides in the cytoplasm. The catalysed reaction is N(2)-acetyl-L-ornithine + 2-oxoglutarate = N-acetyl-L-glutamate 5-semialdehyde + L-glutamate. The protein operates within amino-acid biosynthesis; L-arginine biosynthesis; N(2)-acetyl-L-ornithine from L-glutamate: step 4/4. This chain is Acetylornithine aminotransferase, found in Methanosarcina mazei (strain ATCC BAA-159 / DSM 3647 / Goe1 / Go1 / JCM 11833 / OCM 88) (Methanosarcina frisia).